The following is a 273-amino-acid chain: Undecaprenyl-diphosphatase (273 aa).

A run of 7 helical transmembrane segments spans residues 6 to 26, 45 to 65, 90 to 110, 116 to 136, 190 to 210, 222 to 242, and 252 to 272; these read SLLI…LPVS, AKTF…VMFW, LTLI…LVFH, LFNP…LIAA, YAAS…ATVL, ADIP…LIAI, and ISFI…YVVF.

It belongs to the UppP family.

The protein resides in the cell inner membrane. The catalysed reaction is di-trans,octa-cis-undecaprenyl diphosphate + H2O = di-trans,octa-cis-undecaprenyl phosphate + phosphate + H(+). In terms of biological role, catalyzes the dephosphorylation of undecaprenyl diphosphate (UPP). Confers resistance to bacitracin. In Salmonella heidelberg (strain SL476), this protein is Undecaprenyl-diphosphatase.